The following is a 414-amino-acid chain: 2-acylphloroglucinol 4-prenyltransferase (414 aa).

A chloroplast-targeting transit peptide spans 1–86; it reads MELSSVSSFS…LKPLSIFSCK (86 aa). The next 8 helical transmembrane spans lie at 153-173, 201-221, 229-249, 256-276, 281-301, 336-356, 359-379, and 394-414; these read FSWPLIFRALLGMLAILGSCF, ISVESAWLLTLSPAIIGFILI, LLTSLYCLAILSGTIYSVPPF, ITAFLCILMIHAGLNFSVYYA, LGLAFVWSPSFSFITAFITFM, LLGTGLLLLNYVAAISTAIIW, AFKSNIMLLSHAILAFSLFFQ, and KSFYEFIWILFSAEYVVYLFI.

The protein belongs to the UbiA prenyltransferase family. In terms of assembly, component an active demethylxanthohumol (DMX) biosynthetic metabolon in glandular trichomes (lupulin glands) that encompasses a chalcone synthase (CHS) and a membrane-bound prenyltransferase. Interacts with PT2, forming a functional metabolon. Interacts with CHIL2; this interaction promotes catalytic activity. The cofactor is Mg(2+). In terms of tissue distribution, expressed in trichomes.

Its subcellular location is the plastid. It is found in the chloroplast membrane. The catalysed reaction is 2',4,4',6'-tetrahydroxychalcone + dimethylallyl diphosphate = desmethylxanthohumol + diphosphate. The enzyme catalyses a 2-acylphloroglucinol + dimethylallyl diphosphate = a 2-acyl-4-prenylphloroglucinol + diphosphate. The protein operates within secondary metabolite biosynthesis. Its activity is regulated as follows. Stimulated by CHIL2 but inhibited by CHIL1. Functionally, involved in the biosynthesis of prenylated phenolics natural products which contribute to the bitter taste of beer and display broad biological activities. Catalyzes the first prenylation step in the beta-bitter acid pathway. Uses dimethylallyl diphosphate (DMAPP) as the prenyl donor. The polypeptide is 2-acylphloroglucinol 4-prenyltransferase (Humulus lupulus (European hop)).